A 796-amino-acid polypeptide reads, in one-letter code: Protein translocase subunit SecA 2 (796 aa).

ATP-binding positions include glutamine 84, 102–106 (GEGKT), and aspartate 496.

This sequence belongs to the SecA family. Monomer and homodimer. Part of the essential Sec protein translocation apparatus which comprises SecA, SecYEG and auxiliary proteins SecDF. Other proteins may also be involved.

The protein localises to the cell membrane. It is found in the cytoplasm. It carries out the reaction ATP + H2O + cellular proteinSide 1 = ADP + phosphate + cellular proteinSide 2.. Part of the Sec protein translocase complex. Interacts with the SecYEG preprotein conducting channel. Has a central role in coupling the hydrolysis of ATP to the transfer of proteins into and across the cell membrane, serving as an ATP-driven molecular motor driving the stepwise translocation of polypeptide chains across the membrane. This Staphylococcus aureus (strain MSSA476) protein is Protein translocase subunit SecA 2.